A 521-amino-acid chain; its full sequence is NAD(P)H-quinone oxidoreductase subunit 2 (521 aa).

Helical transmembrane passes span 16–36 (ILPEGIVIITLMVVLIGDLIG), 43–63 (WLPYGAIAGLLAALFALYTAW), 80–100 (LSIVFRGIIALSTIVTLLMSI), 110–130 (LAEFIGIMLTATLGGMFLSGA), 133–153 (LVMIFISLEMLSISSYLMTGY), 168–188 (LLIGASSSAIFLYGSSLLYGL), 211–231 (LGLAIALVFVIAGIAFKISAV), 245–265 (PTPVVAFLSVGSKAAGFALAI), 279–299 (WHLIFTALAILSMVLGNVVAL), 307–327 (MLAYSSIGQAGFVMIGLTAGT), 335–355 (VFYLLVYLFMNLGAFSGVILF), 379–399 (LGLSLCLLSLGGIPPLAGFFG), 401–421 (IYLFWAGWQAELYGLVLLALV), and 467–487 (VGLVLSVIATSLAGILSNPLF).

Belongs to the complex I subunit 2 family. As to quaternary structure, NDH-1 can be composed of about 15 different subunits; different subcomplexes with different compositions have been identified which probably have different functions.

It is found in the cellular thylakoid membrane. The enzyme catalyses a plastoquinone + NADH + (n+1) H(+)(in) = a plastoquinol + NAD(+) + n H(+)(out). The catalysed reaction is a plastoquinone + NADPH + (n+1) H(+)(in) = a plastoquinol + NADP(+) + n H(+)(out). In terms of biological role, NDH-1 shuttles electrons from an unknown electron donor, via FMN and iron-sulfur (Fe-S) centers, to quinones in the respiratory and/or the photosynthetic chain. The immediate electron acceptor for the enzyme in this species is believed to be plastoquinone. Couples the redox reaction to proton translocation, and thus conserves the redox energy in a proton gradient. Cyanobacterial NDH-1 also plays a role in inorganic carbon-concentration. The sequence is that of NAD(P)H-quinone oxidoreductase subunit 2 from Crocosphaera subtropica (strain ATCC 51142 / BH68) (Cyanothece sp. (strain ATCC 51142)).